The primary structure comprises 253 residues: Sulfate transporter CysZ (253 aa).

The next 4 helical transmembrane spans lie at 31 to 51 (FVILPLLVNILLMGGAFWWLF), 75 to 95 (LLWPLAVISVLLVFGYFFSTI), 151 to 171 (IVLLILYFIPGIGQTVAPVLW), and 222 to 242 (IPLLNLFIMPVAVCGATAMWV).

The protein belongs to the CysZ family.

It localises to the cell inner membrane. Functionally, high affinity, high specificity proton-dependent sulfate transporter, which mediates sulfate uptake. Provides the sulfur source for the cysteine synthesis pathway. This Escherichia coli O81 (strain ED1a) protein is Sulfate transporter CysZ.